We begin with the raw amino-acid sequence, 533 residues long: Methyl-accepting chemotaxis protein IV (533 aa).

Topologically, residues 1–6 (MFNRIR) are cytoplasmic. The chain crosses the membrane as a helical span at residues 7-33 (ISTTLFLILILCGILQIGSNGMSFWAF). The Periplasmic portion of the chain corresponds to 34–188 (RDDLQRLNQV…AQSQRNYQIS (155 aa)). The helical transmembrane segment at 189-209 (ALVFISMIIVAAIYISSALWW) threads the bilayer. At 210-533 (TRKMIVQPLA…VQLQIAPVVS (324 aa)) the chain is on the cytoplasmic side. One can recognise an HAMP domain in the interval 212–264 (KMIVQPLAIIGSHFDSIAAGNLARPIAVYGRNEITAIFASLKTMQQALRGTVS). Positions 269–498 (GSQEMHIGIA…EAAVATEQLA (230 aa)) constitute a Methyl-accepting transducer domain. A glutamate methyl ester (Gln) mark is found at Gln-293, Gln-300, and Gln-307. Glu-489 is modified (glutamate methyl ester (Glu)).

It belongs to the methyl-accepting chemotaxis (MCP) protein family.

The protein resides in the cell inner membrane. Its function is as follows. Mediates taxis toward dipeptides via an interaction with the periplasmic dipeptide-binding protein. In terms of biological role, chemotactic-signal transducers respond to changes in the concentration of attractants and repellents in the environment, transduce a signal from the outside to the inside of the cell, and facilitate sensory adaptation through the variation of the level of methylation. Attractants increase the level of methylation while repellents decrease the level of methylation, the methyl groups are added by the methyltransferase CheR and removed by the methylesterase CheB. The sequence is that of Methyl-accepting chemotaxis protein IV (tap) from Escherichia coli (strain K12).